Consider the following 180-residue polypeptide: Large ribosomal subunit protein eL20 (180 aa).

Belongs to the eukaryotic ribosomal protein eL20 family.

This is Large ribosomal subunit protein eL20 from Caenorhabditis elegans.